The chain runs to 418 residues: Tol-Pal system protein TolB (418 aa).

A signal peptide spans 1-21; it reads MKLFVQLVLFISLFIPYSTKA.

This sequence belongs to the TolB family. In terms of assembly, the Tol-Pal system is composed of five core proteins: the inner membrane proteins TolA, TolQ and TolR, the periplasmic protein TolB and the outer membrane protein Pal. They form a network linking the inner and outer membranes and the peptidoglycan layer.

It is found in the periplasm. Part of the Tol-Pal system, which plays a role in outer membrane invagination during cell division and is important for maintaining outer membrane integrity. The chain is Tol-Pal system protein TolB from Wolbachia pipientis subsp. Culex pipiens (strain wPip).